We begin with the raw amino-acid sequence, 342 residues long: Biotin synthase (342 aa).

The Radical SAM core domain occupies 55 to 274 (NAVQCNQLLN…IALARIMMPK (220 aa)). Residues cysteine 70, cysteine 74, and cysteine 77 each coordinate [4Fe-4S] cluster. Cysteine 114, cysteine 145, cysteine 205, and arginine 278 together coordinate [2Fe-2S] cluster.

The protein belongs to the radical SAM superfamily. Biotin synthase family. As to quaternary structure, homodimer. Requires [4Fe-4S] cluster as cofactor. [2Fe-2S] cluster is required as a cofactor.

It carries out the reaction (4R,5S)-dethiobiotin + (sulfur carrier)-SH + 2 reduced [2Fe-2S]-[ferredoxin] + 2 S-adenosyl-L-methionine = (sulfur carrier)-H + biotin + 2 5'-deoxyadenosine + 2 L-methionine + 2 oxidized [2Fe-2S]-[ferredoxin]. It participates in cofactor biosynthesis; biotin biosynthesis; biotin from 7,8-diaminononanoate: step 2/2. Its function is as follows. Catalyzes the conversion of dethiobiotin (DTB) to biotin by the insertion of a sulfur atom into dethiobiotin via a radical-based mechanism. The sequence is that of Biotin synthase from Rhodopseudomonas palustris (strain BisB5).